A 559-amino-acid chain; its full sequence is Formate--tetrahydrofolate ligase (559 aa).

68 to 75 (TPAGEGKT) contacts ATP.

It belongs to the formate--tetrahydrofolate ligase family.

It carries out the reaction (6S)-5,6,7,8-tetrahydrofolate + formate + ATP = (6R)-10-formyltetrahydrofolate + ADP + phosphate. It functions in the pathway one-carbon metabolism; tetrahydrofolate interconversion. The protein is Formate--tetrahydrofolate ligase of Sinorhizobium fredii (strain NBRC 101917 / NGR234).